The chain runs to 553 residues: Probable cytochrome P450 301a1, mitochondrial (553 aa).

Cys-502 lines the heme pocket.

This sequence belongs to the cytochrome P450 family. It depends on heme as a cofactor.

It localises to the mitochondrion membrane. The chain is Probable cytochrome P450 301a1, mitochondrial (Cyp301a1) from Drosophila melanogaster (Fruit fly).